Reading from the N-terminus, the 464-residue chain is Anthocyanidin 3-O-galactosyltransferase 3GT1 (464 aa).

An anthocyanidin-binding residues include Ser-19 and His-21. His-21 (proton acceptor) is an active-site residue. Asn-38 carries an N-linked (GlcNAc...) asparagine glycan. Asp-121 acts as the Charge relay in catalysis. Position 152 (His-152) interacts with an anthocyanidin. Positions 342, 344, 359, 362, 363, 364, and 367 each coordinate UDP-alpha-D-glucose. An an anthocyanidin-binding site is contributed by Gly-382. Residue Asp-383 coordinates UDP-alpha-D-glucose.

It belongs to the UDP-glycosyltransferase family. Monomer. In terms of tissue distribution, mostly expressed in leaves and flowers and, to a lower extent, in roots. In flowers, mainly observed in petals, toruses and scapes, and at lower levels in pistils and stamens.

It carries out the reaction cyanidin + UDP-alpha-D-galactose = cyanidin 3-O-beta-D-galactoside + UDP + H(+). It catalyses the reaction cyanidin + UDP-alpha-D-glucose = cyanidin 3-O-beta-D-glucoside + UDP + H(+). The catalysed reaction is delphinidin + UDP-alpha-D-glucose = delphinidin 3-O-beta-D-glucoside + UDP. The enzyme catalyses malvidin + UDP-alpha-D-glucose = malvidin 3-O-beta-D-glucoside + UDP. It carries out the reaction delphinidin + UDP-alpha-D-galactose = delphinidin 3-O-beta-D-galactoside + UDP + H(+). It catalyses the reaction pelargonidin + UDP-alpha-D-galactose = pelargonidin 3-O-beta-D-galactoside betaine + UDP. The catalysed reaction is peonidin + UDP-alpha-D-galactose = peonidin 3-O-beta-D-galactoside + UDP. The enzyme catalyses malvidin + UDP-alpha-D-galactose = malvidin 3-O-beta-D-galactoside + UDP + H(+). It carries out the reaction petunidin + UDP-alpha-D-galactose = petunidin 3-O-beta-D-galactoside + UDP. It catalyses the reaction an anthocyanidin + UDP-alpha-D-glucose + H(+) = an anthocyanidin 3-O-beta-D-glucoside + UDP. The catalysed reaction is an anthocyanidin + UDP-alpha-D-galactose = an anthocyanidin 3-O-beta-D-galactoside + UDP. The protein operates within pigment biosynthesis; anthocyanin biosynthesis. Its function is as follows. Flavonoid 3-O-glycosyltransferase involved in the biosynthesis of anthocyanins conferring flower red/pink colors, mainly anthocyanidin 3-O-glycosides. Catalyzes the addition of UDP-sugar to the 3-OH of anthocyanidin, with a preference for UDP-galactose (UDP-Gal) as sugar donor and cyanidin as substrate; able to use delphinidin, pelargonidin, peonidin, malvidin and petunidin as substrates in the presence of UDP-Gal. Can also use UDP-glucose (UDP-Glu) as sugar donor with delphinidin, cyanidin and malvidin as substrates, but not active on pelargonidin, peonidin and petunidin. This Rhododendron delavayi (Rhododendron) protein is Anthocyanidin 3-O-galactosyltransferase 3GT1.